The sequence spans 56 residues: uncharacterized protein (56 aa).

A helical transmembrane segment spans residues 6–26 (MLLIMLYMVLVVNDLILYNIL).

The protein localises to the membrane. This is an uncharacterized protein from Dictyostelium discoideum (Social amoeba).